The chain runs to 344 residues: Melanocyte-stimulating hormone receptor (344 aa).

Topologically, residues 1–37 (MPMQGAQRKLLGSLNSTPTATSNLGLAANHTGAPCLE) are extracellular. Asn-29 carries N-linked (GlcNAc...) asparagine glycosylation. Residues 38 to 63 (VSIPDGLFLSLGLVSLVENVLVVAAI) traverse the membrane as a helical segment. Topologically, residues 64–72 (AKNRNLHSS) are cytoplasmic. The chain crosses the membrane as a helical span at residues 73–93 (MYCFICCLALSDLLVSGSNML). Over 94-118 (ETAIILLLEAGTLATRASVVQQLHN) the chain is Extracellular. The helical transmembrane segment at 119 to 140 (TIDVLTCSSMLCSLCFLGAIAV) threads the bilayer. Topologically, residues 141–163 (DRYISIFYALRYHSIMTLPRAQR) are cytoplasmic. The chain crosses the membrane as a helical span at residues 164-183 (AIAAIWVTSVLSSTLFITYY). At 184-191 (DHAAVLLC) the chain is on the extracellular side. A helical transmembrane segment spans residues 192–211 (LVVFFLAMLVLMAVLYVHML). Topologically, residues 212–240 (ARACQHAQGIIRLHNRQLPAHKGFGLRGA) are cytoplasmic. A helical membrane pass occupies residues 241–266 (ATLTILLGIFFLCWGPFFLHLTLVVF). Residues 267–279 (CPQHLTCNCIFKN) lie on the Extracellular side of the membrane. Residues 280 to 300 (FKVFLTLIICNTIIDPLIYAF) traverse the membrane as a helical segment. At 301-344 (RSQELRRTLKEVLLCSWWPGCGAEGGGDSVWPGSCVTLRGPLPP) the chain is on the cytoplasmic side. Cys-315 carries the S-palmitoyl cysteine lipid modification.

It belongs to the G-protein coupled receptor 1 family. Interacts with MGRN1, but does not undergo MGRN1-mediated ubiquitination; this interaction competes with GNAS-binding and thus inhibits agonist-induced cAMP production. Interacts with OPN3; the interaction results in a decrease in MC1R-mediated cAMP signaling and ultimately a decrease in melanin production in melanocytes.

It localises to the cell membrane. Receptor for MSH (alpha, beta and gamma) and ACTH. The activity of this receptor is mediated by G proteins which activate adenylate cyclase. Mediates melanogenesis, the production of eumelanin (black/brown) and phaeomelanin (red/yellow), via regulation of cAMP signaling in melanocytes. The sequence is that of Melanocyte-stimulating hormone receptor (MC1R) from Mico argentatus (Silvery marmoset).